The sequence spans 271 residues: Type II restriction enzyme ScrFI (271 aa).

The enzyme catalyses Endonucleolytic cleavage of DNA to give specific double-stranded fragments with terminal 5'-phosphates.. Functionally, a P subtype restriction enzyme that recognizes the double-stranded sequence 5'-CCNGG-3' and cleaves after C-2. The polypeptide is Type II restriction enzyme ScrFI (Lactococcus lactis subsp. cremoris (Streptococcus cremoris)).